The sequence spans 466 residues: Ribulose bisphosphate carboxylase (466 aa).

Asn111 contributes to the substrate binding site. Residue Lys166 is the Proton acceptor of the active site. Lys168 contributes to the substrate binding site. Residues Lys191, Asp193, and Glu194 each coordinate Mg(2+). N6-carboxylysine is present on Lys191. The Proton acceptor role is filled by His287. The substrate site is built by Arg288, His321, and Ser368.

It belongs to the RuBisCO large chain family. Type II subfamily. In terms of assembly, homodimer. Mg(2+) serves as cofactor.

It catalyses the reaction 2 (2R)-3-phosphoglycerate + 2 H(+) = D-ribulose 1,5-bisphosphate + CO2 + H2O. The catalysed reaction is D-ribulose 1,5-bisphosphate + O2 = 2-phosphoglycolate + (2R)-3-phosphoglycerate + 2 H(+). In terms of biological role, ruBisCO catalyzes two reactions: the carboxylation of D-ribulose 1,5-bisphosphate, the primary event in carbon dioxide fixation, as well as the oxidative fragmentation of the pentose substrate. Both reactions occur simultaneously and in competition at the same active site. The polypeptide is Ribulose bisphosphate carboxylase (cbbM) (Rhodospirillum rubrum).